A 653-amino-acid polypeptide reads, in one-letter code: Multidomain regulatory protein MT1410 (653 aa).

Residues 86 to 142 (SGSEWRLQTDYDGSGVEERYFDFVVTPRRRADGSIEGVQLIVDDVTSRVRARQAAEA) enclose the PAC domain. The region spanning 177–396 (DIAAEYLVAA…DDVTLLAMQR (220 aa)) is the PPM-type phosphatase domain. The Mn(2+) site is built by D211, V212, D328, and D387. Residues 397 to 544 (RAPTPPLHIT…TMVRRAAFQQ (148 aa)) are anti-sigma factor kinase region. The STAS domain maps to 546-653 (IDSEFVSLVE…ADTEDIFAQE (108 aa)). Position 600 is a phosphoserine (S600).

Mg(2+) serves as cofactor. Mn(2+) is required as a cofactor. Post-translationally, autophosphorylated.

The catalysed reaction is O-phospho-L-seryl-[protein] + H2O = L-seryl-[protein] + phosphate. It catalyses the reaction O-phospho-L-threonyl-[protein] + H2O = L-threonyl-[protein] + phosphate. The enzyme catalyses L-seryl-[protein] + ATP = O-phospho-L-seryl-[protein] + ADP + H(+). It carries out the reaction L-threonyl-[protein] + ATP = O-phospho-L-threonyl-[protein] + ADP + H(+). In terms of biological role, primarily acts as an independent SigF regulator that is sensitive to the osmosensory signal, mediating the cross talk of PknD with the SigF regulon. Possesses both phosphatase and kinase activities. The kinase domain functions as a classic anti-sigma factor-like kinase to phosphorylate the anti-anti-sigma factor domain at the canonical regulatory site, and the phosphatase domain antagonizes this activity. The sequence is that of Multidomain regulatory protein MT1410 from Mycobacterium tuberculosis (strain CDC 1551 / Oshkosh).